The chain runs to 85 residues: Large ribosomal subunit protein bL27 (85 aa).

The tract at residues 1–22 (MAHKKAGGSTRNGRDSESKRLG) is disordered.

The protein belongs to the bacterial ribosomal protein bL27 family.

The sequence is that of Large ribosomal subunit protein bL27 from Aliivibrio salmonicida (strain LFI1238) (Vibrio salmonicida (strain LFI1238)).